Here is a 328-residue protein sequence, read N- to C-terminus: Malate dehydrogenase (328 aa).

11-17 (GAAGQIG) serves as a coordination point for NAD(+). Substrate-binding residues include Arg-92 and Arg-98. Residues Asn-105, Gln-112, and 129–131 (VGN) each bind NAD(+). The substrate site is built by Asn-131 and Arg-162. His-187 acts as the Proton acceptor in catalysis.

This sequence belongs to the LDH/MDH superfamily. MDH type 2 family.

It catalyses the reaction (S)-malate + NAD(+) = oxaloacetate + NADH + H(+). Catalyzes the reversible oxidation of malate to oxaloacetate. In Coxiella burnetii (strain CbuG_Q212) (Coxiella burnetii (strain Q212)), this protein is Malate dehydrogenase.